The chain runs to 365 residues: S-adenosylmethionine decarboxylase proenzyme (365 aa).

Active-site residues include Glu31 and Glu34. The active-site Schiff-base intermediate with substrate; via pyruvic acid is the Ser87. Ser87 bears the Pyruvic acid (Ser); by autocatalysis mark. Catalysis depends on Cys101, which acts as the Proton donor; for catalytic activity. Residues Ser248 and His263 each act as proton acceptor; for processing activity in the active site.

It belongs to the eukaryotic AdoMetDC family. As to quaternary structure, heterotetramer of two alpha and two beta chains. It depends on pyruvate as a cofactor. Is synthesized initially as an inactive proenzyme. Formation of the active enzyme involves a self-maturation process in which the active site pyruvoyl group is generated from an internal serine residue via an autocatalytic post-translational modification. Two non-identical subunits are generated from the proenzyme in this reaction, and the pyruvate is formed at the N-terminus of the alpha chain, which is derived from the carboxyl end of the proenzyme. The post-translation cleavage follows an unusual pathway, termed non-hydrolytic serinolysis, in which the side chain hydroxyl group of the serine supplies its oxygen atom to form the C-terminus of the beta chain, while the remainder of the serine residue undergoes an oxidative deamination to produce ammonia and the pyruvoyl group blocking the N-terminus of the alpha chain.

It catalyses the reaction S-adenosyl-L-methionine + H(+) = S-adenosyl 3-(methylsulfanyl)propylamine + CO2. It participates in amine and polyamine biosynthesis; S-adenosylmethioninamine biosynthesis; S-adenosylmethioninamine from S-adenosyl-L-methionine: step 1/1. The chain is S-adenosylmethionine decarboxylase proenzyme (smd-1) from Onchocerca volvulus.